We begin with the raw amino-acid sequence, 508 residues long: Pyruvate kinase 2 (508 aa).

Residue Arg50 participates in substrate binding. K(+)-binding residues include Asn52, Ser54, Asp85, and Thr86. ATP is bound at residue 52 to 55 (NFSH). ATP is bound by residues Arg92 and Lys178. Position 243 (Glu243) interacts with Mg(2+). Substrate is bound by residues Gly266, Asp267, and Thr299. Asp267 provides a ligand contact to Mg(2+).

This sequence belongs to the pyruvate kinase family. Homotetramer. Mg(2+) serves as cofactor. Requires K(+) as cofactor.

The catalysed reaction is pyruvate + ATP = phosphoenolpyruvate + ADP + H(+). It functions in the pathway carbohydrate degradation; glycolysis; pyruvate from D-glyceraldehyde 3-phosphate: step 5/5. The polypeptide is Pyruvate kinase 2 (PYK2) (Candida glabrata (strain ATCC 2001 / BCRC 20586 / JCM 3761 / NBRC 0622 / NRRL Y-65 / CBS 138) (Yeast)).